A 543-amino-acid polypeptide reads, in one-letter code: Plant intracellular Ras-group-related LRR protein 5 (543 aa).

10 LRR repeats span residues 239–262 (LQDV…IGSL), 264–284 (YLTK…AFGE), 285–307 (LSNL…SFGN), 309–331 (TSLA…LGKL), 332–354 (ANLR…IGSC), 356–377 (SLVE…IGKL), 378–400 (EKLE…VGSL), 402–424 (RLRE…CFAT), 426–448 (LVKL…IGNL), and 449–470 (EMLE…SFRC). The stretch at 472–494 (SRLRVFHADETPLEFPPREVVKL) is one LRR 11; degenerate repeat. The GVYW; degenerate signature appears at 495 to 502 (GAQAVVKY).

The protein belongs to the SHOC2 family. In terms of tissue distribution, widely expressed.

In terms of biological role, leucine-rich repeat protein that likely mediates protein interactions, possibly in the context of signal transduction. This chain is Plant intracellular Ras-group-related LRR protein 5 (IRL5), found in Oryza sativa subsp. japonica (Rice).